Reading from the N-terminus, the 360-residue chain is 3-dehydroquinate synthase (360 aa).

Residues aspartate 72–lysine 77, glycine 106–aspartate 110, threonine 130–threonine 131, lysine 143, and lysine 152 contribute to the NAD(+) site. The Zn(2+) site is built by glutamate 185, histidine 248, and histidine 265.

Belongs to the sugar phosphate cyclases superfamily. Dehydroquinate synthase family. Requires Co(2+) as cofactor. Zn(2+) is required as a cofactor. It depends on NAD(+) as a cofactor.

It is found in the cytoplasm. It catalyses the reaction 7-phospho-2-dehydro-3-deoxy-D-arabino-heptonate = 3-dehydroquinate + phosphate. It participates in metabolic intermediate biosynthesis; chorismate biosynthesis; chorismate from D-erythrose 4-phosphate and phosphoenolpyruvate: step 2/7. Its function is as follows. Catalyzes the conversion of 3-deoxy-D-arabino-heptulosonate 7-phosphate (DAHP) to dehydroquinate (DHQ). This is 3-dehydroquinate synthase from Geotalea uraniireducens (strain Rf4) (Geobacter uraniireducens).